The following is a 568-amino-acid chain: MAEPARTLAQDPRLADADQVRWTRCPNCRSLVYLRRLRRNGHVCPDCAHHMRMGVHDRIESLLDAGSFERFGADVAPVDVLGFTDSRPYTERLAQAQRRSGSNEAVLCGTGTIDGAPLVVAALDFGFLGGSVGGVTGELVARAARTALDRRTPLVLVCASGGARMQEGTISLMQMAKTSQEVARLHEAGVLVVSIGTDPTYGGVTASFGMLGDVVVAEPGARIGFAGPQVIRQTIRQELPAGFQTAEYLRDAGMVDLVVPRHELRAHLARLLRVHSGGTAAPAAERGYRTRPRPAADRDASEVLHAARDIGRPSTSDYCARIFEDFVELHGDRVSGDDPAVVAGIGTLGGRPVVVVGHQKGHETAELVQRNFGMPQPAGYHKARRMMDYAERFGFPLVTFVDTPGAHPGVDAEQRGQGTAIAECISRMARLKVPAVSVVTGEGGSGGALALGVGNRVLVLENAYYSVISPEGCSTILWGTAERTSQAAEQLRITAEDLLRLGVVDGVVDEPAGGAQQDHAAMASRLAAALRASIGELSELDGDALLDQRRRRFDRFGDPDHSDSEVQP.

An acetyl-coenzyme A carboxylase carboxyl transferase subunit beta region spans residues 1–253 (MAEPARTLAQ…QTAEYLRDAG (253 aa)). Positions 21-290 (RWTRCPNCRS…APAAERGYRT (270 aa)) constitute a CoA carboxyltransferase N-terminal domain. Residues 21 to 536 (RWTRCPNCRS…AAALRASIGE (516 aa)) form a carboxyltransferase region. Residues cysteine 25, cysteine 28, cysteine 44, and cysteine 47 each coordinate Zn(2+). The segment at 25–47 (CPNCRSLVYLRRLRRNGHVCPDC) adopts a C4-type zinc-finger fold. Residues 254–559 (MVDLVVPRHE…RRRFDRFGDP (306 aa)) are acetyl-coenzyme A carboxylase carboxyl transferase subunit alpha. Residues 286 to 536 (RGYRTRPRPA…AAALRASIGE (251 aa)) enclose the CoA carboxyltransferase C-terminal domain.

This sequence in the N-terminal section; belongs to the AccD/PCCB family. The protein in the C-terminal section; belongs to the AccA family. In terms of assembly, acetyl-CoA carboxylase is a heterotetramer composed of biotin carboxyl carrier protein (AccB), biotin carboxylase (AccC) and two subunits of ACCase subunit beta/alpha. The cofactor is Zn(2+).

It localises to the cytoplasm. The enzyme catalyses N(6)-carboxybiotinyl-L-lysyl-[protein] + acetyl-CoA = N(6)-biotinyl-L-lysyl-[protein] + malonyl-CoA. It participates in lipid metabolism; malonyl-CoA biosynthesis; malonyl-CoA from acetyl-CoA: step 1/1. Component of the acetyl coenzyme A carboxylase (ACC) complex. Biotin carboxylase (BC) catalyzes the carboxylation of biotin on its carrier protein (BCCP) and then the CO(2) group is transferred by the transcarboxylase to acetyl-CoA to form malonyl-CoA. This Saccharopolyspora erythraea (strain ATCC 11635 / DSM 40517 / JCM 4748 / NBRC 13426 / NCIMB 8594 / NRRL 2338) protein is Acetyl-coenzyme A carboxylase carboxyl transferase subunits beta/alpha (accD).